Consider the following 465-residue polypeptide: UDP-N-acetylmuramoylalanine--D-glutamate ligase (465 aa).

115 to 121 (GTDGKTT) lines the ATP pocket.

Belongs to the MurCDEF family.

The protein localises to the cytoplasm. It carries out the reaction UDP-N-acetyl-alpha-D-muramoyl-L-alanine + D-glutamate + ATP = UDP-N-acetyl-alpha-D-muramoyl-L-alanyl-D-glutamate + ADP + phosphate + H(+). It participates in cell wall biogenesis; peptidoglycan biosynthesis. Cell wall formation. Catalyzes the addition of glutamate to the nucleotide precursor UDP-N-acetylmuramoyl-L-alanine (UMA). This is UDP-N-acetylmuramoylalanine--D-glutamate ligase from Chlorobaculum tepidum (strain ATCC 49652 / DSM 12025 / NBRC 103806 / TLS) (Chlorobium tepidum).